The primary structure comprises 335 residues: Cathepsin B (335 aa).

A signal peptide spans 1–17; sequence MWRLLATLSCLVLLTSA. Residues 18–79 constitute a propeptide, activation peptide; the sequence is RESLHFQPLS…QRAAFAADMI (62 aa). Disulfide bonds link Cys-93-Cys-122, Cys-105-Cys-150, Cys-141-Cys-207, Cys-142-Cys-146, Cys-179-Cys-211, and Cys-187-Cys-198. Residue Cys-108 is part of the active site. Residue Asn-192 is glycosylated (N-linked (GlcNAc...) asparagine). Lys-220 carries the N6-acetyllysine modification. A disulfide bond links Cys-227 and Cys-331. Residues His-278 and Asn-298 contribute to the active site. The propeptide occupies 333–335; sequence PHF.

Belongs to the peptidase C1 family. Dimer of a heavy chain and a light chain cross-linked by a disulfide bond. Interacts with SRPX2. Directly interacts with SHKBP1. As to expression, expressed in heart (at protein level).

It is found in the lysosome. Its subcellular location is the melanosome. It localises to the secreted. The protein resides in the extracellular space. The protein localises to the apical cell membrane. It carries out the reaction Hydrolysis of proteins with broad specificity for peptide bonds. Preferentially cleaves -Arg-Arg-|-Xaa bonds in small molecule substrates (thus differing from cathepsin L). In addition to being an endopeptidase, shows peptidyl-dipeptidase activity, liberating C-terminal dipeptides.. In terms of biological role, thiol protease which is believed to participate in intracellular degradation and turnover of proteins. Cleaves matrix extracellular phosphoglycoprotein MEPE. Involved in the solubilization of cross-linked TG/thyroglobulin in the thyroid follicle lumen. Has also been implicated in tumor invasion and metastasis. The chain is Cathepsin B (CTSB) from Sus scrofa (Pig).